A 737-amino-acid chain; its full sequence is Relaxin receptor 2 (737 aa).

Residues 1–399 lie on the Extracellular side of the membrane; sequence MWLLLHVILL…SSSEDLLANG (399 aa). Positions 27-64 constitute an LDL-receptor class A domain; that stretch reads LCPKGYFPCGNLTKCLPRAFHCDGVDDCGNGADEDNCG. Disulfide bonds link Cys-28/Cys-41, Cys-35/Cys-54, and Cys-48/Cys-63. Residue Asn-37 is glycosylated (N-linked (GlcNAc...) asparagine). An N-linked (GlcNAc...) asparagine glycan is attached at Asn-121. LRR repeat units lie at residues 121–142, 145–166, 169–190, 193–214, 217–238, 241–262, 265–286, 289–310, 313–334, and 337–358; these read NVTLLSLKKNKIHRLPVKVFSR, ELRKIYLQHNCITHISRRAFLG, NLQILYLSHNCITSLRPGIFKD, QLAWLILDDNPITRISQKSFMG, SLFFLSMVGNRLEALPETLCAQ, QLNWVDLANNGIKYITNSTFLT, SLTVLFLPRNQIGFVPEKTFSS, NLGELDLSSNMITKLPVHLFSD, LLQKLNLSSNPLLYVHKNQFGS, and QLQSLDLERIEIPNISTGMFQP. The N-linked (GlcNAc...) asparagine glycan is linked to Asn-257. N-linked (GlcNAc...) asparagine glycosylation is found at Asn-318, Asn-350, and Asn-361. Residues 400–420 form a helical membrane-spanning segment; it reads ILRVSVWVIAFITCVGNFLVI. The Cytoplasmic segment spans residues 421-438; the sequence is AVRSLIKAENTTHAMSIK. The helical transmembrane segment at 439-459 threads the bilayer; the sequence is ILCCADCLMGVYLFSVGVFDI. At 460–478 the chain is on the extracellular side; sequence KYRGQYQKYALLWMESVPC. A disulfide bond links Cys-478 and Cys-556. A helical transmembrane segment spans residues 479-501; it reads RLLGFLATLSTEVSVLLLTFLTL. Topologically, residues 502–520 are cytoplasmic; that stretch reads EKFLVIVFPFSNLRLGKRQ. A helical transmembrane segment spans residues 521–541; it reads TAVALASIWVVGFLIAAVPFT. The Extracellular segment spans residues 542 to 575; it reads REDYFGNFYGKNGVCFPLHYDQAEDFGSRGYSLG. Residues 576–596 traverse the membrane as a helical segment; the sequence is IFLGVNLLAFLVIVISYVTMF. Residues 597–622 lie on the Cytoplasmic side of the membrane; it reads CSIHKTALQTAEVRSHIGKEVAVANR. The helical transmembrane segment at 623 to 643 threads the bilayer; that stretch reads FFFIVFSDAICWIPVFVVKIL. Over 644–653 the chain is Extracellular; it reads SLLQVEIPGT. The chain crosses the membrane as a helical span at residues 654–674; that stretch reads ITSWIVVFFLPVNSALNPILY. Over 675–737 the chain is Cytoplasmic; that stretch reads TLTTSFFKDK…GDSIMKPVSP (63 aa).

This sequence belongs to the G-protein coupled receptor 1 family. As to expression, expressed in embryonic and adult gonads of males and females, as well in male gubernarculum. Expressed also in brain. Not detected in kidney, spleen and heart.

The protein localises to the cell membrane. Its function is as follows. Receptor for relaxin. The activity of this receptor is mediated by G proteins leading to stimulation of adenylate cyclase and an increase of cAMP. May also be a receptor for Leydig insulin-like peptide (INSL3). The protein is Relaxin receptor 2 (Rxfp2) of Mus musculus (Mouse).